The sequence spans 597 residues: mRNA-capping enzyme (597 aa).

A TPase region spans residues 1 to 212 (MAYNKIPPRW…DEDGKKDSEP (212 aa)). In terms of domain architecture, Tyrosine-protein phosphatase spans 25–183 (LPLKTMLGPR…FRRYGDIEEA (159 aa)). Cysteine 126 acts as the Phosphocysteine intermediate in catalysis. Positions 181–221 (EEAPPPPVLPDWCFEDEDEEDEDEDGKKDSEPGSSASFSKR) are disordered. Over residues 193–204 (CFEDEDEEDEDE) the composition is skewed to acidic residues. Residues 229–597 (GAIFLEGITV…PPPKRLHRPT (369 aa)) form a GTase region. Lysine 294 acts as the N6-GMP-lysine intermediate in catalysis. Residues arginine 299, arginine 315, 343–345 (DGE), 458–460 (KWK), and 528–533 (RQRIDK) each bind GTP. The interval 330 to 386 (RKDLRMHLSNTLLDGEMIIDKVNGQAVPRYLIYDIIKFNAQPVGDCDFNIRLQCIER) is interaction with POLR2A. Residues 573-597 (KRKYPLDPDTELMPPPPPKRLHRPT) are disordered.

This sequence in the N-terminal section; belongs to the non-receptor class of the protein-tyrosine phosphatase family. It in the C-terminal section; belongs to the eukaryotic GTase family. Interacts with SUPT5H and RNMT. Interacts with POLR2A (via C-terminus); this enhances guanylyltransferase activity. Binds (via GTase domain) to the elongating phosphorylated form of RNA polymerase II; can form direct interactions with the phosphorylated POLR2A C-terminal domain and indirect interactions via bound RNA.

It localises to the nucleus. The catalysed reaction is a 5'-end triphospho-ribonucleoside in mRNA + H2O = a 5'-end diphospho-ribonucleoside in mRNA + phosphate + H(+). It catalyses the reaction a 5'-end diphospho-ribonucleoside in mRNA + GTP + H(+) = a 5'-end (5'-triphosphoguanosine)-ribonucleoside in mRNA + diphosphate. Its activity is regulated as follows. RNA triphosphatase activity is inhibited by vanadate, iodoacetate and magnesium. Bifunctional mRNA-capping enzyme exhibiting RNA 5'-triphosphate monophosphatase activity in the N-terminal part and mRNA guanylyltransferase activity in the C-terminal part. Catalyzes the first two steps of cap formation: by removing the gamma-phosphate from the 5'-triphosphate end of nascent mRNA to yield a diphosphate end, and by transferring the GMP moiety of GTP to the 5'-diphosphate terminus of RNA via a covalent enzyme-GMP reaction intermediate. The chain is mRNA-capping enzyme (Rngtt) from Mus musculus (Mouse).